We begin with the raw amino-acid sequence, 257 residues long: MASKIGSRRWMLQLIMQLGSVLLTRCPFWGCFSQLMLYAERAEARRKPDIPVPYLYFDMGAAVLCASFMSFGVKRRWFALGAALQLAISTYAAYIGGYVHYGDWLKVRMYSRTVAIIGGFLVLASGAGELYRRKPRSRSLQSTGQVFLGIYLICVAYSLQHSKEDRLAYLNHLPGGELMIQLFFVLYGVLALAFLSGYYVTLAAQILAVLLPPVMLLIDGNVAYWHNTRRVEFWNQMKLLGESVGIFGTAVILATDG.

8 helical membrane-spanning segments follow: residues 21 to 40 (VLLT…LYAE), 52 to 72 (VPYL…MSFG), 77 to 97 (WFAL…YIGG), 110 to 130 (YSRT…AGEL), 139 to 159 (SLQS…AYSL), 182 to 202 (LFFV…YVTL), 206 to 226 (ILAV…AYWH), and 233 to 253 (FWNQ…AVIL).

It localises to the membrane. In terms of biological role, may activate NF-kappa-B signaling pathways. This Pongo abelii (Sumatran orangutan) protein is Transmembrane protein 101 (TMEM101).